Consider the following 298-residue polypeptide: UDP-3-O-acyl-N-acetylglucosamine deacetylase (298 aa).

Positions 79, 239, and 243 each coordinate Zn(2+). Catalysis depends on histidine 266, which acts as the Proton donor.

It belongs to the LpxC family. Requires Zn(2+) as cofactor.

It carries out the reaction a UDP-3-O-[(3R)-3-hydroxyacyl]-N-acetyl-alpha-D-glucosamine + H2O = a UDP-3-O-[(3R)-3-hydroxyacyl]-alpha-D-glucosamine + acetate. The protein operates within glycolipid biosynthesis; lipid IV(A) biosynthesis; lipid IV(A) from (3R)-3-hydroxytetradecanoyl-[acyl-carrier-protein] and UDP-N-acetyl-alpha-D-glucosamine: step 2/6. Functionally, catalyzes the hydrolysis of UDP-3-O-myristoyl-N-acetylglucosamine to form UDP-3-O-myristoylglucosamine and acetate, the committed step in lipid A biosynthesis. This is UDP-3-O-acyl-N-acetylglucosamine deacetylase from Wigglesworthia glossinidia brevipalpis.